A 267-amino-acid chain; its full sequence is Potassium channel regulatory protein (267 aa).

The BTB domain occupies E5–T74.

Can form homooligomers. Interacts with KCNA1 (via cytoplasmic N-terminal domain) and KCNA4.

It is found in the endoplasmic reticulum. Inhibits potassium fluxes in cells. May regulate Kv1 family channel proteins by retaining a fraction of channels in endomembranes. The sequence is that of Potassium channel regulatory protein (KCNRG) from Bos taurus (Bovine).